The primary structure comprises 180 residues: Cell division protein ZapC (180 aa).

The protein belongs to the ZapC family. Interacts directly with FtsZ.

It localises to the cytoplasm. Contributes to the efficiency of the cell division process by stabilizing the polymeric form of the cell division protein FtsZ. Acts by promoting interactions between FtsZ protofilaments and suppressing the GTPase activity of FtsZ. The sequence is that of Cell division protein ZapC from Vibrio cholerae serotype O1 (strain ATCC 39315 / El Tor Inaba N16961).